The chain runs to 225 residues: UPF0700 transmembrane protein RA0705 (225 aa).

Transmembrane regions (helical) follow at residues 17 to 37 (VGLA…AIGL), 66 to 86 (GLLL…GVMI), 95 to 115 (ALLF…QPEL), 117 to 137 (FVSL…IEGL), 168 to 188 (IIQI…AVLV), and 194 to 214 (LALW…FQIP).

This sequence belongs to the UPF0700 family.

It is found in the cell membrane. The polypeptide is UPF0700 transmembrane protein RA0705 (Rhizobium meliloti (strain 1021) (Ensifer meliloti)).